The following is an 89-amino-acid chain: Small ribosomal subunit protein uS14 (89 aa).

Belongs to the universal ribosomal protein uS14 family. Part of the 30S ribosomal subunit. Contacts proteins S3 and S10.

Binds 16S rRNA, required for the assembly of 30S particles and may also be responsible for determining the conformation of the 16S rRNA at the A site. The chain is Small ribosomal subunit protein uS14 from Shouchella clausii (strain KSM-K16) (Alkalihalobacillus clausii).